The chain runs to 470 residues: Cell division protein FtsP (470 aa).

The segment at residues 1–27 (MSLSRRQFIQASGIALCAGAVPLKASA) is a signal peptide (tat-type signal). The 59-residue stretch at 229–287 (VRLRLLNASNSRRYQLQMSDGRPLHVISGDQGFLPAPVSVKQLSLAPGERREILVDMSN) folds into the Plastocyanin-like domain.

This sequence belongs to the FtsP family. Predicted to be exported by the Tat system. The position of the signal peptide cleavage has not been experimentally proven.

It localises to the periplasm. In terms of biological role, cell division protein that is required for growth during stress conditions. May be involved in protecting or stabilizing the divisomal assembly under conditions of stress. This Shigella dysenteriae serotype 1 (strain Sd197) protein is Cell division protein FtsP.